The following is a 1101-amino-acid chain: Carbamoyl phosphate synthase large chain (1101 aa).

A carboxyphosphate synthetic domain region spans residues 1 to 402 (MPKRTDLKSV…ALQKALRSLE (402 aa)). Positions 129, 169, 175, 176, 208, 210, 215, 241, 242, 243, 285, and 299 each coordinate ATP. Residues 133 to 328 (KGVVERAGGE…IAKIATKLAL (196 aa)) enclose the ATP-grasp 1 domain. Mg(2+) contacts are provided by Gln285, Glu299, and Asn301. The Mn(2+) site is built by Gln285, Glu299, and Asn301. The oligomerization domain stretch occupies residues 403–544 (QKGSELAFPQ…YRYSSYDLET (142 aa)). The interval 545–947 (EVAPHEGESV…AFAKSQSAAG (403 aa)) is carbamoyl phosphate synthetic domain. The 192-residue stretch at 675-866 (ALVLERAGLV…LAKAAARIGV (192 aa)) folds into the ATP-grasp 2 domain. Residues Arg711, Arg750, Leu752, Glu757, Gly782, Ile783, His784, Ser785, Gln825, and Glu837 each coordinate ATP. Mg(2+) contacts are provided by Gln825, Glu837, and Asn839. Residues Gln825, Glu837, and Asn839 each contribute to the Mn(2+) site. The region spanning 948-1093 (GPLPTSGRVF…QEHDARLQQA (146 aa)) is the MGS-like domain. The allosteric domain stretch occupies residues 948 to 1101 (GPLPTSGRVF…QAVAGPEAAA (154 aa)).

Belongs to the CarB family. In terms of assembly, composed of two chains; the small (or glutamine) chain promotes the hydrolysis of glutamine to ammonia, which is used by the large (or ammonia) chain to synthesize carbamoyl phosphate. Tetramer of heterodimers (alpha,beta)4. Mg(2+) serves as cofactor. It depends on Mn(2+) as a cofactor.

The catalysed reaction is hydrogencarbonate + L-glutamine + 2 ATP + H2O = carbamoyl phosphate + L-glutamate + 2 ADP + phosphate + 2 H(+). The enzyme catalyses hydrogencarbonate + NH4(+) + 2 ATP = carbamoyl phosphate + 2 ADP + phosphate + 2 H(+). It participates in amino-acid biosynthesis; L-arginine biosynthesis; carbamoyl phosphate from bicarbonate: step 1/1. The protein operates within pyrimidine metabolism; UMP biosynthesis via de novo pathway; (S)-dihydroorotate from bicarbonate: step 1/3. Functionally, large subunit of the glutamine-dependent carbamoyl phosphate synthetase (CPSase). CPSase catalyzes the formation of carbamoyl phosphate from the ammonia moiety of glutamine, carbonate, and phosphate donated by ATP, constituting the first step of 2 biosynthetic pathways, one leading to arginine and/or urea and the other to pyrimidine nucleotides. The large subunit (synthetase) binds the substrates ammonia (free or transferred from glutamine from the small subunit), hydrogencarbonate and ATP and carries out an ATP-coupled ligase reaction, activating hydrogencarbonate by forming carboxy phosphate which reacts with ammonia to form carbamoyl phosphate. The protein is Carbamoyl phosphate synthase large chain of Micrococcus luteus (strain ATCC 4698 / DSM 20030 / JCM 1464 / CCM 169 / CCUG 5858 / IAM 1056 / NBRC 3333 / NCIMB 9278 / NCTC 2665 / VKM Ac-2230) (Micrococcus lysodeikticus).